The following is a 154-amino-acid chain: Interleukin-2 (154 aa).

The first 20 residues, 1 to 20 (MYRMQLLSCIALSLALVTNS), serve as a signal peptide directing secretion. The O-linked (GalNAc...) threonine glycan is linked to Thr-23. Cys-78 and Cys-126 are disulfide-bonded.

This sequence belongs to the IL-2 family.

Its subcellular location is the secreted. Functionally, cytokine produced by activated CD4-positive helper T-cells and to a lesser extend activated CD8-positive T-cells and natural killer (NK) cells that plays pivotal roles in the immune response and tolerance. Binds to a receptor complex composed of either the high-affinity trimeric IL-2R (IL2RA/CD25, IL2RB/CD122 and IL2RG/CD132) or the low-affinity dimeric IL-2R (IL2RB and IL2RG). Interaction with the receptor leads to oligomerization and conformation changes in the IL-2R subunits resulting in downstream signaling starting with phosphorylation of JAK1 and JAK3. In turn, JAK1 and JAK3 phosphorylate the receptor to form a docking site leading to the phosphorylation of several substrates including STAT5. This process leads to activation of several pathways including STAT, phosphoinositide-3-kinase/PI3K and mitogen-activated protein kinase/MAPK pathways. Functions as a T-cell growth factor and can increase NK-cell cytolytic activity as well. Promotes strong proliferation of activated B-cells and subsequently immunoglobulin production. Plays a pivotal role in regulating the adaptive immune system by controlling the survival and proliferation of regulatory T-cells, which are required for the maintenance of immune tolerance. Moreover, participates in the differentiation and homeostasis of effector T-cell subsets, including Th1, Th2, Th17 as well as memory CD8-positive T-cells. This is Interleukin-2 (IL2) from Papio anubis (Olive baboon).